The primary structure comprises 238 residues: Ribonuclease 3 (238 aa).

One can recognise an RNase III domain in the interval 11 to 136 (RARLEAAIGY…LIAAIYLDGG (126 aa)). E49 is a binding site for Mg(2+). Residue D53 is part of the active site. D122 and E125 together coordinate Mg(2+). E125 is an active-site residue. The DRBM domain maps to 161–230 (DAKTELQEWA…AMKLLEREGV (70 aa)). The segment covering 180-193 (YRTEDRSGPDHDPR) has biased composition (basic and acidic residues). The segment at 180-215 (YRTEDRSGPDHDPRFTVTVEVDGIDPETGVDRSKRG) is disordered.

It belongs to the ribonuclease III family. As to quaternary structure, homodimer. Mg(2+) serves as cofactor.

Its subcellular location is the cytoplasm. It carries out the reaction Endonucleolytic cleavage to 5'-phosphomonoester.. Functionally, digests double-stranded RNA. Involved in the processing of primary rRNA transcript to yield the immediate precursors to the large and small rRNAs (23S and 16S). Processes some mRNAs, and tRNAs when they are encoded in the rRNA operon. Processes pre-crRNA and tracrRNA of type II CRISPR loci if present in the organism. The chain is Ribonuclease 3 from Sinorhizobium medicae (strain WSM419) (Ensifer medicae).